We begin with the raw amino-acid sequence, 223 residues long: Peroxynitrite isomerase 1 (223 aa).

Positions 69 to 75 (GVWRGEG) match the GXWXGXG motif. Residues lysine 186 and histidine 213 each coordinate heme b.

Belongs to the nitrobindin family. In terms of assembly, homodimer. Requires heme b as cofactor.

The enzyme catalyses peroxynitrite = nitrate. The protein operates within nitrogen metabolism. Its function is as follows. Heme-binding protein able to scavenge peroxynitrite and to protect free L-tyrosine against peroxynitrite-mediated nitration, by acting as a peroxynitrite isomerase that converts peroxynitrite to nitrate. Therefore, this protein likely plays a role in peroxynitrite sensing and in the detoxification of reactive nitrogen and oxygen species (RNS and ROS, respectively). Is able to bind nitric oxide (NO) in vitro, but may act as a sensor of peroxynitrite levels in vivo. This chain is Peroxynitrite isomerase 1, found in Mycobacterium marinum (strain ATCC BAA-535 / M).